Here is a 766-residue protein sequence, read N- to C-terminus: 5-methyltetrahydropteroyltriglutamate--homocysteine methyltransferase (766 aa).

5-methyltetrahydropteroyltri-L-glutamate is bound by residues 16–19 (RELK) and lysine 119. Residues 440-442 (IGS) and glutamate 493 contribute to the L-homocysteine site. L-methionine-binding positions include 440-442 (IGS) and glutamate 493. 5-methyltetrahydropteroyltri-L-glutamate-binding positions include 524 to 525 (RC) and tryptophan 570. Aspartate 608 provides a ligand contact to L-homocysteine. An L-methionine-binding site is contributed by aspartate 608. Glutamate 614 contacts 5-methyltetrahydropteroyltri-L-glutamate. Histidine 650, cysteine 652, and glutamate 674 together coordinate Zn(2+). Catalysis depends on histidine 703, which acts as the Proton donor. Residue cysteine 735 coordinates Zn(2+).

The protein belongs to the vitamin-B12 independent methionine synthase family. Zn(2+) serves as cofactor.

It catalyses the reaction 5-methyltetrahydropteroyltri-L-glutamate + L-homocysteine = tetrahydropteroyltri-L-glutamate + L-methionine. The protein operates within amino-acid biosynthesis; L-methionine biosynthesis via de novo pathway; L-methionine from L-homocysteine (MetE route): step 1/1. Functionally, catalyzes the transfer of a methyl group from 5-methyltetrahydrofolate to homocysteine resulting in methionine formation. The polypeptide is 5-methyltetrahydropteroyltriglutamate--homocysteine methyltransferase (Pseudomonas aeruginosa (strain LESB58)).